We begin with the raw amino-acid sequence, 283 residues long: Polyamine aminopropyltransferase (283 aa).

One can recognise a PABS domain in the interval 3-236; sequence GIWFSELQTP…GLWAFSLGSK (234 aa). An S-methyl-5'-thioadenosine-binding site is contributed by glutamine 32. Spermidine-binding residues include histidine 63 and aspartate 87. S-methyl-5'-thioadenosine contacts are provided by residues glutamate 107 and 138 to 139; that span reads DG. The Proton acceptor role is filled by aspartate 156. Spermidine is bound at residue 156–159; that stretch reads DSTD. Proline 163 lines the S-methyl-5'-thioadenosine pocket.

The protein belongs to the spermidine/spermine synthase family. In terms of assembly, homodimer or homotetramer.

The protein resides in the cytoplasm. The enzyme catalyses S-adenosyl 3-(methylsulfanyl)propylamine + putrescine = S-methyl-5'-thioadenosine + spermidine + H(+). The protein operates within amine and polyamine biosynthesis; spermidine biosynthesis; spermidine from putrescine: step 1/1. Its function is as follows. Catalyzes the irreversible transfer of a propylamine group from the amino donor S-adenosylmethioninamine (decarboxy-AdoMet) to putrescine (1,4-diaminobutane) to yield spermidine. The chain is Polyamine aminopropyltransferase from Moorella thermoacetica (strain ATCC 39073 / JCM 9320).